A 363-amino-acid polypeptide reads, in one-letter code: Carbamoyl phosphate synthase small chain (363 aa).

A CPSase region spans residues 1–172; it reads MTKRILMLED…AFASPGDGKR (172 aa). L-glutamine-binding residues include serine 46, glycine 220, and glycine 222. One can recognise a Glutamine amidotransferase type-1 domain in the interval 172 to 359; that stretch reads RVVLVDYGVK…MEMMNGKEEG (188 aa). Cysteine 247 acts as the Nucleophile in catalysis. Residues leucine 248, glutamine 251, asparagine 289, glycine 291, and tyrosine 292 each coordinate L-glutamine. Active-site residues include histidine 332 and glutamate 334.

The protein belongs to the CarA family. As to quaternary structure, composed of two chains; the small (or glutamine) chain promotes the hydrolysis of glutamine to ammonia, which is used by the large (or ammonia) chain to synthesize carbamoyl phosphate. Tetramer of heterodimers (alpha,beta)4.

It catalyses the reaction hydrogencarbonate + L-glutamine + 2 ATP + H2O = carbamoyl phosphate + L-glutamate + 2 ADP + phosphate + 2 H(+). The enzyme catalyses L-glutamine + H2O = L-glutamate + NH4(+). Its pathway is amino-acid biosynthesis; L-arginine biosynthesis; carbamoyl phosphate from bicarbonate: step 1/1. It participates in pyrimidine metabolism; UMP biosynthesis via de novo pathway; (S)-dihydroorotate from bicarbonate: step 1/3. Its function is as follows. Small subunit of the glutamine-dependent carbamoyl phosphate synthetase (CPSase). CPSase catalyzes the formation of carbamoyl phosphate from the ammonia moiety of glutamine, carbonate, and phosphate donated by ATP, constituting the first step of 2 biosynthetic pathways, one leading to arginine and/or urea and the other to pyrimidine nucleotides. The small subunit (glutamine amidotransferase) binds and cleaves glutamine to supply the large subunit with the substrate ammonia. The polypeptide is Carbamoyl phosphate synthase small chain (Listeria monocytogenes serotype 4b (strain F2365)).